The sequence spans 365 residues: Probable L-tyrosine/L-aspartate decarboxylase (365 aa).

Residue K224 is modified to N6-(pyridoxal phosphate)lysine.

It belongs to the group II decarboxylase family. MfnA subfamily. Pyridoxal 5'-phosphate serves as cofactor.

It carries out the reaction L-tyrosine + H(+) = tyramine + CO2. The enzyme catalyses L-aspartate + H(+) = beta-alanine + CO2. Its pathway is cofactor biosynthesis; methanofuran biosynthesis. It functions in the pathway cofactor biosynthesis; coenzyme A biosynthesis. In terms of biological role, catalyzes the decarboxylation of L-tyrosine to produce tyramine for methanofuran biosynthesis. Can also catalyze the decarboxylation of L-aspartate to produce beta-alanine for coenzyme A (CoA) biosynthesis. The polypeptide is Probable L-tyrosine/L-aspartate decarboxylase (Methanoculleus marisnigri (strain ATCC 35101 / DSM 1498 / JR1)).